Consider the following 291-residue polypeptide: ATP synthase gamma chain (291 aa).

The protein belongs to the ATPase gamma chain family. F-type ATPases have 2 components, CF(1) - the catalytic core - and CF(0) - the membrane proton channel. CF(1) has five subunits: alpha(3), beta(3), gamma(1), delta(1), epsilon(1). CF(0) has three main subunits: a, b and c.

The protein localises to the cell inner membrane. Functionally, produces ATP from ADP in the presence of a proton gradient across the membrane. The gamma chain is believed to be important in regulating ATPase activity and the flow of protons through the CF(0) complex. In Persephonella marina (strain DSM 14350 / EX-H1), this protein is ATP synthase gamma chain.